The primary structure comprises 387 residues: 3-dehydroquinate synthase (387 aa).

This sequence belongs to the archaeal-type DHQ synthase family.

It catalyses the reaction 2-amino-2,3,7-trideoxy-D-lyxo-hept-6-ulosonate + NAD(+) + H2O = 3-dehydroquinate + NH4(+) + NADH + H(+). In terms of biological role, catalyzes the oxidative deamination and cyclization of 2-amino-3,7-dideoxy-D-threo-hept-6-ulosonic acid (ADH) to yield 3-dehydroquinate (DHQ), which is fed into the canonical shikimic pathway of aromatic amino acid biosynthesis. This Halobacterium salinarum (strain ATCC 29341 / DSM 671 / R1) protein is 3-dehydroquinate synthase.